We begin with the raw amino-acid sequence, 292 residues long: Transforming growth factor-beta receptor type 3-like protein (292 aa).

A signal peptide spans 1-16 (MLGTVLLLALLPGITT). The ZP; truncated domain maps to 17–170 (LPSGPPAPPF…APAPLTPPPP (154 aa)). The Extracellular portion of the chain corresponds to 17–244 (LPSGPPAPPF…PAPAALEPAP (228 aa)). The cysteines at positions 85 and 147 are disulfide-linked. A disordered region spans residues 160 to 236 (RAPAPLTPPP…AVRPEPPAPA (77 aa)). 2 stretches are compositionally biased toward pro residues: residues 164–175 (PLTPPPPPPPSR) and 213–222 (PRPPPRPPKS). The chain crosses the membrane as a helical span at residues 245–265 (VVALVLAAFVLGAALAAGLGL). The Cytoplasmic segment spans residues 266-292 (VCAHSAPHAPGPPARASPSGPQPRRSQ). The disordered stretch occupies residues 273–292 (HAPGPPARASPSGPQPRRSQ). Over residues 281–292 (ASPSGPQPRRSQ) the composition is skewed to low complexity.

Post-translationally, glycosylated. As to expression, expressed in pituitary gland gonadotrope cells.

It localises to the cell membrane. Functionally, expressed in gonadotrope cells, acts as an inhibin B coreceptor and regulates follicle-stimulating hormone (FSH) levels and female fertility. The chain is Transforming growth factor-beta receptor type 3-like protein from Homo sapiens (Human).